We begin with the raw amino-acid sequence, 251 residues long: Zinc import ATP-binding protein ZnuC (251 aa).

The ABC transporter domain occupies 5–220; that stretch reads VSLENVSVSF…PEFISMFGPR (216 aa). Position 37-44 (37-44) interacts with ATP; it reads GPNGAGKS.

This sequence belongs to the ABC transporter superfamily. Zinc importer (TC 3.A.1.15.5) family. As to quaternary structure, the complex is composed of two ATP-binding proteins (ZnuC), two transmembrane proteins (ZnuB) and a solute-binding protein (ZnuA).

It is found in the cell inner membrane. It catalyses the reaction Zn(2+)(out) + ATP(in) + H2O(in) = Zn(2+)(in) + ADP(in) + phosphate(in) + H(+)(in). Part of the ABC transporter complex ZnuABC involved in zinc import. Responsible for energy coupling to the transport system. Seems to be important for the virulence. The sequence is that of Zinc import ATP-binding protein ZnuC from Salmonella typhimurium (strain LT2 / SGSC1412 / ATCC 700720).